The sequence spans 352 residues: Neuronal growth regulator 1 (352 aa).

The N-terminal stretch at 1 to 35 (MVPLVRGAGGSHQWLAAVLLGLCCLLPAGRLAAPG) is a signal peptide. 3 Ig-like C2-type domains span residues 36–132 (GDFP…VHLT), 137–219 (PKIF…KVTV), and 223–311 (PTIQ…LPLN). Cys58 and Cys116 are disulfide-bonded. Asn71 and Asn153 each carry an N-linked (GlcNAc...) asparagine glycan. 2 disulfide bridges follow: Cys158–Cys201 and Cys243–Cys295. 4 N-linked (GlcNAc...) asparagine glycosylation sites follow: Asn273, Asn284, Asn292, and Asn305. Gly322 carries GPI-anchor amidated glycine lipidation. The propeptide at 323-352 (DAEVLFSCWYLVLTLSSLTSIFYLKNIILH) is removed in mature form.

It belongs to the immunoglobulin superfamily. IgLON family. As to quaternary structure, interacts with CEPU-1 and LAMP. In terms of processing, glycosylated. Expressed in embryonic retina, telencephalon, tectum, cerebellum and diencephalon (at protein level).

Its subcellular location is the cell membrane. In terms of biological role, may be involved in cell-adhesion. May participate in the regulation of neurite outgrowth in the developing brain. The polypeptide is Neuronal growth regulator 1 (NEGR1) (Gallus gallus (Chicken)).